A 327-amino-acid polypeptide reads, in one-letter code: Polyadenylate-binding protein-interacting protein 9 (327 aa).

Positions 59-69 (KLNPLAKEFFP) match the PAM2-like motif. Over residues 97-113 (KQSGEEFDLDAKKDDNT) the composition is skewed to basic and acidic residues. Residues 97–132 (KQSGEEFDLDAKKDDNTRKRRNYSQGRRRLTGRISK) are disordered. Residues 114–125 (RKRRNYSQGRRR) carry the Bipartite nuclear localization signal motif. Over residues 114–127 (RKRRNYSQGRRRLT) the composition is skewed to basic residues. RRM domains follow at residues 141 to 216 (RTVY…PSKT) and 238 to 314 (RTIY…PSKT). The disordered stretch occupies residues 308–327 (RVSPSKTPVRPRITRPPSTN).

It localises to the nucleus. The sequence is that of Polyadenylate-binding protein-interacting protein 9 (CID9) from Arabidopsis thaliana (Mouse-ear cress).